A 430-amino-acid polypeptide reads, in one-letter code: Enolase (430 aa).

Residue Q165 coordinates (2R)-2-phosphoglycerate. The active-site Proton donor is E207. Residues D244, E287, and D314 each contribute to the Mg(2+) site. K339, R368, S369, and K390 together coordinate (2R)-2-phosphoglycerate. K339 (proton acceptor) is an active-site residue.

It belongs to the enolase family. In terms of assembly, component of the RNA degradosome, a multiprotein complex involved in RNA processing and mRNA degradation. Mg(2+) is required as a cofactor.

The protein resides in the cytoplasm. The protein localises to the secreted. Its subcellular location is the cell surface. It carries out the reaction (2R)-2-phosphoglycerate = phosphoenolpyruvate + H2O. It participates in carbohydrate degradation; glycolysis; pyruvate from D-glyceraldehyde 3-phosphate: step 4/5. In terms of biological role, catalyzes the reversible conversion of 2-phosphoglycerate (2-PG) into phosphoenolpyruvate (PEP). It is essential for the degradation of carbohydrates via glycolysis. In Xylella fastidiosa (strain M23), this protein is Enolase.